A 196-amino-acid polypeptide reads, in one-letter code: GTP cyclohydrolase-2 (196 aa).

49-53 (RVHSE) provides a ligand contact to GTP. The Zn(2+) site is built by C54, C65, and C67. Residues Q70, 92–94 (EGR), and T114 each bind GTP. D126 (proton acceptor) is an active-site residue. The Nucleophile role is filled by R128. T149 and K154 together coordinate GTP.

The protein belongs to the GTP cyclohydrolase II family. In terms of assembly, homodimer. Requires Zn(2+) as cofactor.

The catalysed reaction is GTP + 4 H2O = 2,5-diamino-6-hydroxy-4-(5-phosphoribosylamino)-pyrimidine + formate + 2 phosphate + 3 H(+). It functions in the pathway cofactor biosynthesis; riboflavin biosynthesis; 5-amino-6-(D-ribitylamino)uracil from GTP: step 1/4. Its function is as follows. Catalyzes the conversion of GTP to 2,5-diamino-6-ribosylamino-4(3H)-pyrimidinone 5'-phosphate (DARP), formate and pyrophosphate. In Enterobacter sp. (strain 638), this protein is GTP cyclohydrolase-2.